Reading from the N-terminus, the 67-residue chain is Large ribosomal subunit protein bL35 (67 aa).

It belongs to the bacterial ribosomal protein bL35 family.

The polypeptide is Large ribosomal subunit protein bL35 (Bartonella tribocorum (strain CIP 105476 / IBS 506)).